A 755-amino-acid chain; its full sequence is Primary amine oxidase (755 aa).

A signal peptide spans 1–30; the sequence is MANGLKFSPRKTALALAVAVVCAWQSPVFA. Substrate is bound by residues 411-422 and 493-498; these read YLDSGDYGMGTL and VGNYDY. Asp413 serves as the catalytic Proton acceptor. The active-site Schiff-base intermediate with substrate; via topaquinone is the Tyr496. Tyr496 bears the 2',4',5'-topaquinone mark. 2 residues coordinate Cu cation: His554 and His556. Positions 563, 564, 565, 603, 697, 700, 702, and 708 each coordinate Ca(2+). Asp563 lines the Mn(2+) pocket. Asp565 provides a ligand contact to Mn(2+). Asp708 serves as a coordination point for Mn(2+). His719 serves as a coordination point for Cu cation.

The protein belongs to the copper/topaquinone oxidase family. Homodimer. Cu cation serves as cofactor. The cofactor is Zn(2+). Requires Ca(2+) as cofactor. It depends on L-topaquinone as a cofactor. Mn(2+) is required as a cofactor. Topaquinone (TPQ) is generated by copper-dependent autoxidation of a specific tyrosyl residue.

It is found in the periplasm. The catalysed reaction is a primary methyl amine + O2 + H2O = an aldehyde + H2O2 + NH4(+). Functionally, active on tyramine, tryptamine, beta-phenethylamine and dopamine. The polypeptide is Primary amine oxidase (maoA) (Klebsiella aerogenes (Enterobacter aerogenes)).